A 405-amino-acid chain; its full sequence is L-carnitine CoA-transferase (405 aa).

The CoA site is built by Lys97 and Arg104. The Nucleophile role is filled by Asp169.

Belongs to the CoA-transferase III family. CaiB subfamily. In terms of assembly, homodimer.

The protein resides in the cytoplasm. It catalyses the reaction crotonobetainyl-CoA + (R)-carnitine = crotonobetaine + (R)-carnitinyl-CoA. The enzyme catalyses 4-(trimethylamino)butanoyl-CoA + (R)-carnitine = (R)-carnitinyl-CoA + 4-(trimethylamino)butanoate. It participates in amine and polyamine metabolism; carnitine metabolism. In terms of biological role, catalyzes the reversible transfer of the CoA moiety from gamma-butyrobetainyl-CoA to L-carnitine to generate L-carnitinyl-CoA and gamma-butyrobetaine. Is also able to catalyze the reversible transfer of the CoA moiety from gamma-butyrobetainyl-CoA or L-carnitinyl-CoA to crotonobetaine to generate crotonobetainyl-CoA. This is L-carnitine CoA-transferase from Escherichia fergusonii (strain ATCC 35469 / DSM 13698 / CCUG 18766 / IAM 14443 / JCM 21226 / LMG 7866 / NBRC 102419 / NCTC 12128 / CDC 0568-73).